The sequence spans 508 residues: Photosystem II CP47 reaction center protein (508 aa).

6 helical membrane passes run 21–36 (SVHI…WAGS), 101–115 (IVFS…IWHW), 140–156 (GIHL…SGAF), 203–218 (IAAG…FHLS), 237–252 (VLSS…AFIV), and 457–472 (TFAL…HGAR).

Belongs to the PsbB/PsbC family. PsbB subfamily. PSII is composed of 1 copy each of membrane proteins PsbA, PsbB, PsbC, PsbD, PsbE, PsbF, PsbH, PsbI, PsbJ, PsbK, PsbL, PsbM, PsbT, PsbX, PsbY, PsbZ, Psb30/Ycf12, at least 3 peripheral proteins of the oxygen-evolving complex and a large number of cofactors. It forms dimeric complexes. Binds multiple chlorophylls. PSII binds additional chlorophylls, carotenoids and specific lipids. serves as cofactor.

The protein resides in the plastid. Its subcellular location is the chloroplast thylakoid membrane. Its function is as follows. One of the components of the core complex of photosystem II (PSII). It binds chlorophyll and helps catalyze the primary light-induced photochemical processes of PSII. PSII is a light-driven water:plastoquinone oxidoreductase, using light energy to abstract electrons from H(2)O, generating O(2) and a proton gradient subsequently used for ATP formation. The protein is Photosystem II CP47 reaction center protein of Cycas taitungensis (Prince sago).